The primary structure comprises 283 residues: 4-hydroxy-3-methylbut-2-enyl diphosphate reductase (283 aa).

C12 provides a ligand contact to [4Fe-4S] cluster. (2E)-4-hydroxy-3-methylbut-2-enyl diphosphate contacts are provided by H40 and H72. H40 and H72 together coordinate dimethylallyl diphosphate. Isopentenyl diphosphate is bound by residues H40 and H72. C94 is a [4Fe-4S] cluster binding site. H122 lines the (2E)-4-hydroxy-3-methylbut-2-enyl diphosphate pocket. A dimethylallyl diphosphate-binding site is contributed by H122. H122 contributes to the isopentenyl diphosphate binding site. The Proton donor role is filled by E124. T160 lines the (2E)-4-hydroxy-3-methylbut-2-enyl diphosphate pocket. C188 lines the [4Fe-4S] cluster pocket. 3 residues coordinate (2E)-4-hydroxy-3-methylbut-2-enyl diphosphate: S216, N218, and S259. The dimethylallyl diphosphate site is built by S216, N218, and S259. Positions 216, 218, and 259 each coordinate isopentenyl diphosphate.

It belongs to the IspH family. [4Fe-4S] cluster is required as a cofactor.

It catalyses the reaction isopentenyl diphosphate + 2 oxidized [2Fe-2S]-[ferredoxin] + H2O = (2E)-4-hydroxy-3-methylbut-2-enyl diphosphate + 2 reduced [2Fe-2S]-[ferredoxin] + 2 H(+). The enzyme catalyses dimethylallyl diphosphate + 2 oxidized [2Fe-2S]-[ferredoxin] + H2O = (2E)-4-hydroxy-3-methylbut-2-enyl diphosphate + 2 reduced [2Fe-2S]-[ferredoxin] + 2 H(+). Its pathway is isoprenoid biosynthesis; dimethylallyl diphosphate biosynthesis; dimethylallyl diphosphate from (2E)-4-hydroxy-3-methylbutenyl diphosphate: step 1/1. It participates in isoprenoid biosynthesis; isopentenyl diphosphate biosynthesis via DXP pathway; isopentenyl diphosphate from 1-deoxy-D-xylulose 5-phosphate: step 6/6. Functionally, catalyzes the conversion of 1-hydroxy-2-methyl-2-(E)-butenyl 4-diphosphate (HMBPP) into a mixture of isopentenyl diphosphate (IPP) and dimethylallyl diphosphate (DMAPP). Acts in the terminal step of the DOXP/MEP pathway for isoprenoid precursor biosynthesis. The polypeptide is 4-hydroxy-3-methylbut-2-enyl diphosphate reductase (Dictyoglomus turgidum (strain DSM 6724 / Z-1310)).